A 289-amino-acid chain; its full sequence is Glucose and ribitol dehydrogenase homolog 2 (289 aa).

Positions 1–32 (MASGFPPQKQETQPGIQHVMEPTPEFSSSNYK) are disordered. Position 43-67 (43-67 (LVTGGDSGIGKAVCHCYALEGASVA)) interacts with NAD(+). S180 is a binding site for substrate. Catalysis depends on Y193, which acts as the Proton acceptor.

It belongs to the short-chain dehydrogenases/reductases (SDR) family.

Its function is as follows. May act as a short alcohol-polyol-sugar dehydrogenase possibly related to carbohydrate metabolism and the acquisition of desiccation tolerance. May also be involved in signal transduction. This chain is Glucose and ribitol dehydrogenase homolog 2, found in Arabidopsis thaliana (Mouse-ear cress).